Reading from the N-terminus, the 506-residue chain is Acetaldehyde dehydrogenase 2 (506 aa).

240-245 contributes to the NAD(+) binding site; that stretch reads GETTTG. Catalysis depends on residues Glu-262 and Cys-301.

This sequence belongs to the aldehyde dehydrogenase family.

It catalyses the reaction an aldehyde + NAD(+) + H2O = a carboxylate + NADH + 2 H(+). Its pathway is alcohol metabolism; ethanol degradation; acetate from ethanol: step 2/2. It functions in the pathway ketone degradation; acetoin degradation. Functionally, involved in the catabolism of acetoin and ethanol. The chain is Acetaldehyde dehydrogenase 2 (acoD) from Cupriavidus necator (strain ATCC 17699 / DSM 428 / KCTC 22496 / NCIMB 10442 / H16 / Stanier 337) (Ralstonia eutropha).